A 64-amino-acid polypeptide reads, in one-letter code: Large ribosomal subunit protein bL35 (64 aa).

It belongs to the bacterial ribosomal protein bL35 family.

The polypeptide is Large ribosomal subunit protein bL35 (Lactiplantibacillus plantarum (strain ATCC BAA-793 / NCIMB 8826 / WCFS1) (Lactobacillus plantarum)).